The primary structure comprises 105 residues: Keratin-associated protein 17-1 (105 aa).

As to quaternary structure, interacts with hair keratins.

Its function is as follows. In the hair cortex, hair keratin intermediate filaments are embedded in an interfilamentous matrix, consisting of hair keratin-associated proteins (KRTAP), which are essential for the formation of a rigid and resistant hair shaft through their extensive disulfide bond cross-linking with abundant cysteine residues of hair keratins. The matrix proteins include the high-sulfur and high-glycine-tyrosine keratins. This Homo sapiens (Human) protein is Keratin-associated protein 17-1 (KRTAP17-1).